Consider the following 83-residue polypeptide: MPNIKSAIKRVRTTETAEERNISKKNAMRTAVKRAKTAISTDAENKDELLRFAIKQVDKASQSNLIHSNKADRIKSKLMSANK.

Residues 1 to 21 (MPNIKSAIKRVRTTETAEERN) form a disordered region. Residues 12–21 (RTTETAEERN) are compositionally biased toward basic and acidic residues.

This sequence belongs to the bacterial ribosomal protein bS20 family.

Its function is as follows. Binds directly to 16S ribosomal RNA. The protein is Small ribosomal subunit protein bS20 of Staphylococcus epidermidis (strain ATCC 35984 / DSM 28319 / BCRC 17069 / CCUG 31568 / BM 3577 / RP62A).